The following is a 230-amino-acid chain: V-type proton ATPase subunit E (230 aa).

It belongs to the V-ATPase E subunit family. As to quaternary structure, V-ATPase is a heteromultimeric enzyme composed of a peripheral catalytic V1 complex (components A to H) attached to an integral membrane V0 proton pore complex (components: a, c, c', c'' and d).

Subunit of the peripheral V1 complex of vacuolar ATPase essential for assembly or catalytic function. V-ATPase is responsible for acidifying a variety of intracellular compartments in eukaryotic cells. This Citrus unshiu (Satsuma mandarin) protein is V-type proton ATPase subunit E (VATE).